The primary structure comprises 60 residues: Short neurotoxin 1 (60 aa).

Intrachain disulfides connect Cys3-Cys22, Cys17-Cys39, Cys41-Cys52, and Cys53-Cys58.

The protein belongs to the three-finger toxin family. Short-chain subfamily. Type I alpha-neurotoxin sub-subfamily. As to expression, expressed by the venom gland.

It is found in the secreted. In terms of biological role, binds to muscle nicotinic acetylcholine receptor (nAChR) and inhibit acetylcholine from binding to the receptor, thereby impairing neuromuscular transmission. This is Short neurotoxin 1 from Hydrophis cyanocinctus (Asian annulated sea snake).